The sequence spans 152 residues: Ribosome maturation factor RimP (152 aa).

The protein belongs to the RimP family.

The protein resides in the cytoplasm. Functionally, required for maturation of 30S ribosomal subunits. The polypeptide is Ribosome maturation factor RimP (Stutzerimonas stutzeri (strain A1501) (Pseudomonas stutzeri)).